We begin with the raw amino-acid sequence, 275 residues long: Myoblast determination protein 1 homolog (275 aa).

The region spanning 84–135 (DRRKAATMRERRRLSKVNDAFETLKRCTSTNPNQRLPKVEILRNAISYIESL) is the bHLH domain. Residues 234–275 (EGHEESPCSPHEGSVLSDTGTTAPSPTSCPQQQAQETIYQVL) form a disordered region. A compositionally biased stretch (polar residues) spans 249 to 275 (LSDTGTTAPSPTSCPQQQAQETIYQVL).

As to quaternary structure, efficient DNA binding requires dimerization with another bHLH protein. In terms of tissue distribution, from mid-gastrula to just before somite formation, expressed in cells adjacent to axial mesoderm. Subsequently, during the anterior-to-posterior wave of somite formation and maturation, expressed within particular regions of each somite. Expressed in both muscle and non-muscle cells.

It is found in the nucleus. Its function is as follows. May act as a transcriptional activator that promotes transcription of muscle-specific target genes and plays a role in muscle differentiation. The protein is Myoblast determination protein 1 homolog (myod1) of Danio rerio (Zebrafish).